We begin with the raw amino-acid sequence, 159 residues long: SsrA-binding protein (159 aa).

It belongs to the SmpB family.

Its subcellular location is the cytoplasm. Its function is as follows. Required for rescue of stalled ribosomes mediated by trans-translation. Binds to transfer-messenger RNA (tmRNA), required for stable association of tmRNA with ribosomes. tmRNA and SmpB together mimic tRNA shape, replacing the anticodon stem-loop with SmpB. tmRNA is encoded by the ssrA gene; the 2 termini fold to resemble tRNA(Ala) and it encodes a 'tag peptide', a short internal open reading frame. During trans-translation Ala-aminoacylated tmRNA acts like a tRNA, entering the A-site of stalled ribosomes, displacing the stalled mRNA. The ribosome then switches to translate the ORF on the tmRNA; the nascent peptide is terminated with the 'tag peptide' encoded by the tmRNA and targeted for degradation. The ribosome is freed to recommence translation, which seems to be the essential function of trans-translation. The chain is SsrA-binding protein from Coxiella burnetii (strain CbuG_Q212) (Coxiella burnetii (strain Q212)).